The following is a 1432-amino-acid chain: Gag-Pol polyprotein (1432 aa).

2 consecutive CCHC-type zinc fingers follow at residues 368-385 (QRCY…DCKN) and 386-403 (QKCF…NCKS). The 74-residue stretch at 452 to 525 (VRALIDTGAD…TPVNLLGRSV (74 aa)) folds into the Peptidase A2 domain. Asp457 functions as the For protease activity; shared with dimeric partner in the catalytic mechanism. One can recognise a Reverse transcriptase domain in the interval 579–766 (DGKISRTPWD…EQVQWLGYEL (188 aa)). Asp645, Asp720, and Asp721 together coordinate Mg(2+). Positions 815 to 843 (KGKTDLKDKIKLTEEAIQCLETVNKRLKD) form a coiled coil. In terms of domain architecture, RNase H type-1 spans 959-1079 (IERYPTYYTD…VDQEVQKALQ (121 aa)). Mg(2+)-binding residues include Asp968, Glu999, Asp1019, and Asp1071. Residues 1157–1198 (EAIPQAIEEHEKWHTTAEILAREFQLPRRVAREIVHRCQACK) form an Integrase-type zinc finger. Positions 1166, 1170, 1194, and 1197 each coordinate Zn(2+). One can recognise an Integrase catalytic domain in the interval 1206-1358 (RGTNPRERFL…TPYEIYLESE (153 aa)). 2 residues coordinate Mg(2+): Asp1219 and Asp1271. Residues 1376 to 1422 (KWAYVRDKRKVWKGPYKVLWDGEGAAVVEENAMPTLYPHRHMRFIPP) constitute a DNA-binding region (integrase-type).

In terms of processing, specific enzymatic cleavages by the viral protease yield mature proteins. The protease is released by autocatalytic cleavage. The polyprotein is cleaved during and after budding, this process is termed maturation.

The protein resides in the virion. The catalysed reaction is DNA(n) + a 2'-deoxyribonucleoside 5'-triphosphate = DNA(n+1) + diphosphate. It carries out the reaction Endohydrolysis of RNA in RNA/DNA hybrids. Three different cleavage modes: 1. sequence-specific internal cleavage of RNA. Human immunodeficiency virus type 1 and Moloney murine leukemia virus enzymes prefer to cleave the RNA strand one nucleotide away from the RNA-DNA junction. 2. RNA 5'-end directed cleavage 13-19 nucleotides from the RNA end. 3. DNA 3'-end directed cleavage 15-20 nucleotides away from the primer terminus.. The enzyme catalyses 3'-end directed exonucleolytic cleavage of viral RNA-DNA hybrid.. In terms of biological role, matrix protein p16 forms the outer shell of the core of the virus, lining the inner surface of the viral membrane. Its function is as follows. Capsid protein p26 forms the conical core of the virus that encapsulates the genomic RNA-nucleocapsid complex. The aspartyl protease mediates proteolytic cleavages of Gag and Gag-Pol polyproteins during or shortly after the release of the virion from the plasma membrane. Cleavages take place as an ordered, step-wise cascade to yield mature proteins. This process is called maturation. Displays maximal activity during the budding process just prior to particle release from the cell. Functionally, reverse transcriptase/ribonuclease H (RT) is a multifunctional enzyme that converts the viral RNA genome into dsDNA in the cytoplasm, shortly after virus entry into the cell. This enzyme displays a DNA polymerase activity that can copy either DNA or RNA templates, and a ribonuclease H (RNase H) activity that cleaves the RNA strand of RNA-DNA heteroduplexes in a partially processive 3' to 5' endonucleasic mode. Conversion of viral genomic RNA into dsDNA requires many steps. A tRNA binds to the primer-binding site (PBS) situated at the 5'-end of the viral RNA. RT uses the 3' end of the tRNA primer to perform a short round of RNA-dependent minus-strand DNA synthesis. The reading proceeds through the U5 region and ends after the repeated (R) region which is present at both ends of viral RNA. The portion of the RNA-DNA heteroduplex is digested by the RNase H, resulting in a ssDNA product attached to the tRNA primer. This ssDNA/tRNA hybridizes with the identical R region situated at the 3' end of viral RNA. This template exchange, known as minus-strand DNA strong stop transfer, can be either intra- or intermolecular. RT uses the 3' end of this newly synthesized short ssDNA to perform the RNA-dependent minus-strand DNA synthesis of the whole template. RNase H digests the RNA template except for a polypurine tract (PPT) situated at the 5'-end of the genome. It is not clear if both polymerase and RNase H activities are simultaneous. RNase H probably can proceed both in a polymerase-dependent (RNA cut into small fragments by the same RT performing DNA synthesis) and a polymerase-independent mode (cleavage of remaining RNA fragments by free RTs). Secondly, RT performs DNA-directed plus-strand DNA synthesis using the PPT that has not been removed by RNase H as primer. PPT and tRNA primers are then removed by RNase H. The 3' and 5' ssDNA PBS regions hybridize to form a circular dsDNA intermediate. Strand displacement synthesis by RT to the PBS and PPT ends produces a blunt ended, linear dsDNA copy of the viral genome that includes long terminal repeats (LTRs) at both ends. In terms of biological role, integrase catalyzes viral DNA integration into the host chromosome, by performing a series of DNA cutting and joining reactions. This enzyme activity takes place after virion entry into a cell and reverse transcription of the RNA genome in dsDNA. This Jembrana disease virus (JDV) protein is Gag-Pol polyprotein (gag-pol).